A 104-amino-acid polypeptide reads, in one-letter code: L-rhamnose mutarotase (104 aa).

Y18 serves as a coordination point for substrate. The active-site Proton donor is the H22. Substrate-binding positions include Y41 and 76-77 (WW).

It belongs to the rhamnose mutarotase family. Homodimer.

It is found in the cytoplasm. The catalysed reaction is alpha-L-rhamnose = beta-L-rhamnose. Its pathway is carbohydrate metabolism; L-rhamnose metabolism. In terms of biological role, involved in the anomeric conversion of L-rhamnose. This chain is L-rhamnose mutarotase, found in Pectobacterium carotovorum subsp. carotovorum (strain PC1).